A 285-amino-acid polypeptide reads, in one-letter code: Ubiquinone biosynthesis protein COQ4, mitochondrial (285 aa).

Residues 1 to 11 (MPPTVRQGIRT) constitute a mitochondrion transit peptide. Zn(2+) is bound by residues H166, D167, H170, and E182.

Belongs to the COQ4 family. Component of a multi-subunit COQ enzyme complex, composed of at least COQ3, COQ4, COQ5, COQ6, COQ7 and COQ9. Zn(2+) is required as a cofactor.

It is found in the mitochondrion inner membrane. The enzyme catalyses a 4-hydroxy-3-methoxy-5-(all-trans-polyprenyl)benzoate + H(+) = a 2-methoxy-6-(all-trans-polyprenyl)phenol + CO2. It functions in the pathway cofactor biosynthesis; ubiquinone biosynthesis. Lyase that catalyzes the C1-decarboxylation of 4-hydroxy-3-methoxy-5-(all-trans-polyprenyl)benzoic acid into 2-methoxy-6-(all-trans-polyprenyl)phenol during ubiquinone biosynthesis. The chain is Ubiquinone biosynthesis protein COQ4, mitochondrial from Paracoccidioides brasiliensis (strain Pb18).